A 285-amino-acid chain; its full sequence is Pantothenate synthetase (285 aa).

33 to 40 is an ATP binding site; that stretch reads MGALHEGH. The Proton donor role is filled by H40. Position 64 (Q64) interacts with (R)-pantoate. Q64 is a beta-alanine binding site. 150–153 is an ATP binding site; sequence GEKD. A (R)-pantoate-binding site is contributed by Q156. ATP is bound by residues A179 and 187-190; that span reads LSSR.

Belongs to the pantothenate synthetase family. Homodimer.

It localises to the cytoplasm. The catalysed reaction is (R)-pantoate + beta-alanine + ATP = (R)-pantothenate + AMP + diphosphate + H(+). The protein operates within cofactor biosynthesis; (R)-pantothenate biosynthesis; (R)-pantothenate from (R)-pantoate and beta-alanine: step 1/1. Catalyzes the condensation of pantoate with beta-alanine in an ATP-dependent reaction via a pantoyl-adenylate intermediate. The polypeptide is Pantothenate synthetase (Caulobacter vibrioides (strain ATCC 19089 / CIP 103742 / CB 15) (Caulobacter crescentus)).